The chain runs to 463 residues: Exodeoxyribonuclease 7 large subunit (463 aa).

The protein belongs to the XseA family. In terms of assembly, heterooligomer composed of large and small subunits.

It localises to the cytoplasm. It carries out the reaction Exonucleolytic cleavage in either 5'- to 3'- or 3'- to 5'-direction to yield nucleoside 5'-phosphates.. In terms of biological role, bidirectionally degrades single-stranded DNA into large acid-insoluble oligonucleotides, which are then degraded further into small acid-soluble oligonucleotides. The sequence is that of Exodeoxyribonuclease 7 large subunit from Pseudomonas syringae pv. syringae (strain B728a).